The following is a 708-amino-acid chain: Leucine-rich repeat neuronal protein 3 (708 aa).

The first 22 residues, 1–22 (MKDMPLQIHVLLGLAITTLVQA), serve as a signal peptide directing secretion. Positions 23–69 (VDKKVDCPQLCTCEIRPWFTPTSIYMEASTVDCNDLGLLTFPARLPA) constitute an LRRNT domain. Over 23-628 (VDKKVDCPQL…KEYEKSNTTT (606 aa)) the chain is Extracellular. LRR repeat units lie at residues 70–91 (NTQI…TDFP), 93–114 (NLTG…NVKK), 117–138 (QLLS…CLSE), 141–162 (NLQE…AFIG), 165–186 (NLLR…WFDA), 189–210 (NLEI…NFKP), 213–234 (NLRS…ALVG), 237–258 (NLES…ALQK), 261–282 (NLKF…DFSN), 285–304 (HLKE…DSLA), 310–332 (DLRK…AFFR), and 335–358 (KLES…ESLP). Residues Asn93 and Asn103 are each glycosylated (N-linked (GlcNAc...) asparagine). Asn223 is a glycosylation site (N-linked (GlcNAc...) asparagine). An LRRCT domain is found at 368–421 (NPIRCDCVIRWINMNKTNIRFMEPDSLFCVDPPEFQGQNVRQVHFRDMMEICLP). Asn382 is a glycosylation site (N-linked (GlcNAc...) asparagine). The Ig-like C2-type domain occupies 421 to 514 (PLIAPESFPS…DLKSVMIKVD (94 aa)). Cys444 and Cys496 are oxidised to a cystine. Asn522, Asn579, Asn608, and Asn625 each carry an N-linked (GlcNAc...) asparagine glycan. A Fibronectin type-III domain is found at 523-617 (GSLNIKIRDI…NVTTKGLDPD (95 aa)). Residues 629–649 (LMACLGGLLGIIGVICLISCL) form a helical membrane-spanning segment. Residues 650-708 (SPEMNCDGGHSYVRNYLQKPTFALGELYPPLINLWEAGKEKSTSLKVKATVIGLPTNMS) lie on the Cytoplasmic side of the membrane.

The protein localises to the membrane. This chain is Leucine-rich repeat neuronal protein 3 (LRRN3), found in Pongo abelii (Sumatran orangutan).